Here is a 424-residue protein sequence, read N- to C-terminus: Interferon regulatory factor 8 (424 aa).

The segment at residues 7–114 (GRRLRQWLIE…EPYKVYRIVP (108 aa)) is a DNA-binding region (IRF tryptophan pentad repeat).

Belongs to the IRF family. In terms of assembly, interacts with COPS2. Interacts (via C-terminus) with TRIM21 (via C-terminus). Interacts with the BATF-JUNB heterodimer. Interacts with BATF (via bZIP domain); the interaction is direct. Interacts with SPI1. Post-translationally, ubiquitinated. Ubiquitination by TRIM21 in macrophages, a process that is strongly increased upon interferon gamma stimulation, leds to the enhanced transcriptional activity of target cytokine genes. Ubiquitination leads to its degradation by the proteasome. In terms of processing, sumoylated with SUMO3. Desumoylated by SENP1. Expressed in bone marrow macrophages (at protein level). Mainly expressed in lymphoid tissues. Predominantly expressed in CD8(+)-expressing dendritic cells.

The protein resides in the nucleus. It localises to the cytoplasm. Transcription factor that specifically binds to the upstream regulatory region of type I interferon (IFN) and IFN-inducible MHC class I genes (the interferon consensus sequence (ICS)). Can both act as a transcriptional activator or repressor. Plays a negative regulatory role in cells of the immune system. Involved in CD8(+) dendritic cell differentiation by forming a complex with the BATF-JUNB heterodimer in immune cells, leading to recognition of AICE sequence (5'-TGAnTCA/GAAA-3'), an immune-specific regulatory element, followed by cooperative binding of BATF and IRF8 and activation of genes. Required for the development of plasmacytoid dendritic cells (pDCs), which produce most of the type I IFN in response to viral infection. Positively regulates macroautophagy in dendritic cells. Acts as a transcriptional repressor of osteoclast differentiation factors such as NFATC1 and EEIG1. This chain is Interferon regulatory factor 8, found in Mus musculus (Mouse).